Reading from the N-terminus, the 104-residue chain is Large ribosomal subunit protein uL24 (104 aa).

It belongs to the universal ribosomal protein uL24 family. In terms of assembly, part of the 50S ribosomal subunit.

One of two assembly initiator proteins, it binds directly to the 5'-end of the 23S rRNA, where it nucleates assembly of the 50S subunit. In terms of biological role, one of the proteins that surrounds the polypeptide exit tunnel on the outside of the subunit. The polypeptide is Large ribosomal subunit protein uL24 (Proteus mirabilis (strain HI4320)).